The primary structure comprises 55 residues: Large ribosomal subunit protein bL33 (55 aa).

Belongs to the bacterial ribosomal protein bL33 family.

The polypeptide is Large ribosomal subunit protein bL33 (Proteus mirabilis (strain HI4320)).